A 177-amino-acid polypeptide reads, in one-letter code: Large ribosomal subunit protein uL6 (177 aa).

It belongs to the universal ribosomal protein uL6 family. As to quaternary structure, part of the 50S ribosomal subunit.

Its function is as follows. This protein binds to the 23S rRNA, and is important in its secondary structure. It is located near the subunit interface in the base of the L7/L12 stalk, and near the tRNA binding site of the peptidyltransferase center. This chain is Large ribosomal subunit protein uL6, found in Rickettsia africae (strain ESF-5).